A 314-amino-acid polypeptide reads, in one-letter code: HTH-type transcriptional regulator LeuO (314 aa).

Residues 22 to 79 (VDLNLLTVFDAVMQEQNITRAAHVLGMSQPAVSNAVARLKVMFNDELFVRYGRGIQPT) form the HTH lysR-type domain. Residues 39–58 (ITRAAHVLGMSQPAVSNAVA) constitute a DNA-binding region (H-T-H motif).

Belongs to the LysR transcriptional regulatory family.

Its function is as follows. A global transcription factor. Activates transcription of the 9 following operons; yjjQ-bglJ, yjjP, acrEF, ybdO, yjcRQP, casABCDE12, rhsD-ybbC, fepE and gltF, in most cases it probably interferes with silencing by H-NS and activates transcription. Represses transcription of the 3 following operons; uxaCA, sdaCB and btsT. H-NS repression of the bgl operon, leading to the ability to metabolize some beta-glucosides. It also directly activates the bgl operon. Activation is H-NS and BglJ-RcsB independent. The chain is HTH-type transcriptional regulator LeuO (leuO) from Escherichia coli (strain K12).